Here is a 55-residue protein sequence, read N- to C-terminus: ATP synthase protein 8 (55 aa).

Residues 4 to 24 (LDPAPWFSMLTVSWLIIFLLI) traverse the membrane as a helical segment.

This sequence belongs to the ATPase protein 8 family. In terms of assembly, F-type ATPases have 2 components, CF(1) - the catalytic core - and CF(0) - the membrane proton channel.

Its subcellular location is the mitochondrion membrane. Its function is as follows. Mitochondrial membrane ATP synthase (F(1)F(0) ATP synthase or Complex V) produces ATP from ADP in the presence of a proton gradient across the membrane which is generated by electron transport complexes of the respiratory chain. F-type ATPases consist of two structural domains, F(1) - containing the extramembraneous catalytic core and F(0) - containing the membrane proton channel, linked together by a central stalk and a peripheral stalk. During catalysis, ATP synthesis in the catalytic domain of F(1) is coupled via a rotary mechanism of the central stalk subunits to proton translocation. Part of the complex F(0) domain. Minor subunit located with subunit a in the membrane. The sequence is that of ATP synthase protein 8 (MT-ATP8) from Petromyzon marinus (Sea lamprey).